Reading from the N-terminus, the 484-residue chain is ATP-dependent RNA helicase DDX25 (484 aa).

Residue Thr49 is modified to Phosphothreonine. The short motif at 62–75 (LAANSLLNKLIRQS) is the Nuclear export signal element. The Q motif motif lies at 98–126 (KTFEELRLKEELLKGIYAMGFNRPSKIQE). A Nuclear localization signal motif is present at residues 101 to 115 (EELRLKEELLKGIYA). In terms of domain architecture, Helicase ATP-binding spans 131-301 (MMLAHPPQNL…ERIIPDPNVI (171 aa)). 144–151 (SQSGTGKT) is a binding site for ATP. The DEAD box motif lies at 248–251 (DEAD). Residues 312–479 (NIRQYYVLCE…QLDPEDMDEI (168 aa)) form the Helicase C-terminal domain.

Belongs to the DEAD box helicase family. Phosphorylated on threonine residues. The phosphorylated form is found in the cytoplasm but not in the nucleus. In terms of tissue distribution, isoform 1 is expressed in germ cells. Isoform 2 is expressed in Leydig cells and in round spermatids of adult testis upon gonadotropin stimulation.

The protein localises to the cytoplasm. The protein resides in the nucleus. It carries out the reaction ATP + H2O = ADP + phosphate + H(+). Functionally, ATP-dependent RNA helicase. Required for mRNA export and translation regulation during spermatid development. In Mus musculus (Mouse), this protein is ATP-dependent RNA helicase DDX25 (Ddx25).